Reading from the N-terminus, the 350-residue chain is Glycogenin-1 (350 aa).

An N-acetylthreonine modification is found at threonine 2. 4 residues coordinate UDP: leucine 9, threonine 11, asparagine 12, and tyrosine 15. Residues leucine 9, threonine 11, asparagine 12, and tyrosine 15 each coordinate UDP-alpha-D-glucose. The residue at position 44 (serine 44) is a Phosphoserine. Arginine 77 serves as a coordination point for UDP. Arginine 77, lysine 86, aspartate 102, alanine 103, aspartate 104, asparagine 133, serine 134, aspartate 160, aspartate 163, and glutamine 164 together coordinate UDP-alpha-D-glucose. UDP contacts are provided by aspartate 102, alanine 103, and aspartate 104. Position 102 (aspartate 102) interacts with Mn(2+). Aspartate 104 contacts Mn(2+). Residue tyrosine 195 is glycosylated (O-linked (Glc...) tyrosine). Residues histidine 212, glycine 215, and lysine 218 each coordinate UDP. Residue histidine 212 participates in Mn(2+) binding. UDP-alpha-D-glucose contacts are provided by glycine 215 and lysine 218. The segment at 301–333 is interaction with GYS1; that stretch reads SHLSLGEIPAMAQPFVSSEERKERWEQGQADYM.

This sequence belongs to the glycosyltransferase 8 family. Glycogenin subfamily. In terms of assembly, part of the GYS1-GYG1 complex, a heterooctamer composed of a tetramer of GYS1 and 2 dimers of GYG1, where each GYS1 protomer binds to one GYG1 subunit (via GYG1 C-terminus); the GYS1 tetramer may dissociate from GYG1 dimers to continue glycogen polymerization on its own. May also form a heterooctamer complex with GYS2 (via GYG1 C-terminus). The cofactor is Mn(2+). In terms of processing, self-glycosylated by the transfer of glucose residues from UDP-glucose to itself, forming an alpha-1,4-glycan of around 10 residues attached to Tyr-195. Post-translationally, phosphorylated. In terms of tissue distribution, highly expressed in skeletal muscle and heart, with lower levels in brain, lung, kidney and pancreas.

The protein resides in the cytoplasm. The protein localises to the nucleus. It carries out the reaction L-tyrosyl-[glycogenin] + UDP-alpha-D-glucose = alpha-D-glucosyl-L-tyrosyl-[glycogenin] + UDP + H(+). The catalysed reaction is [1,4-alpha-D-glucosyl](n)-L-tyrosyl-[glycogenin] + UDP-alpha-D-glucose = [1,4-alpha-D-glucosyl](n+1)-L-tyrosyl-[glycogenin] + UDP + H(+). The protein operates within glycan biosynthesis; glycogen biosynthesis. Inhibited by palladium ions. Glycogenin participates in the glycogen biosynthetic process along with glycogen synthase and glycogen branching enzyme. It catalyzes the formation of a short alpha (1,4)-glucosyl chain covalently attached via a glucose 1-O-tyrosyl linkage to internal tyrosine residues and these chains act as primers for the elongation reaction catalyzed by glycogen synthase. The chain is Glycogenin-1 from Homo sapiens (Human).